The sequence spans 146 residues: Hemoglobin subunit beta (146 aa).

An N-acetylvaline modification is found at Val1. Residues 2-146 form the Globin domain; the sequence is HLTGEEKAAV…VANALAHKYH (145 aa). Phosphothreonine is present on Thr12. Ser44 bears the Phosphoserine mark. The residue at position 59 (Lys59) is an N6-acetyllysine. Residue His63 coordinates heme b. Position 82 is an N6-acetyllysine (Lys82). A heme b-binding site is contributed by His92. The residue at position 93 (Cys93) is an S-nitrosocysteine. Lys144 carries the N6-acetyllysine modification.

It belongs to the globin family. In terms of assembly, heterotetramer of two alpha chains and two beta chains. Red blood cells.

Its function is as follows. Involved in oxygen transport from the lung to the various peripheral tissues. This is Hemoglobin subunit beta (HBB) from Ailurus fulgens (Himalayan red panda).